A 326-amino-acid polypeptide reads, in one-letter code: NADH-specific methylglyoxal reductase (326 aa).

Residues 20–21 (TW) and D54 each bind NAD(+). The active-site Proton donor is the Y59. NAD(+) is bound by residues Q189, 217–222 (YSPLEQ), G291, and Q297.

This sequence belongs to the aldo/keto reductase family. Aldo/keto reductase 11 subfamily. In terms of assembly, monomer.

The enzyme catalyses hydroxyacetone + NAD(+) = methylglyoxal + NADH + H(+). Its function is as follows. Catalyzes the NADH-dependent reduction of methylglyoxal (2-oxopropanal) in vitro. It is not known if this activity has physiological significance. Cannot use NADPH as a cosubstrate. Seems to play some role in intestinal colonization. The polypeptide is NADH-specific methylglyoxal reductase (ydjG) (Escherichia coli (strain K12)).